Consider the following 34-residue polypeptide: uncharacterized protein (34 aa).

This is an uncharacterized protein from Treponema pallidum (strain Nichols).